A 356-amino-acid polypeptide reads, in one-letter code: DNA polymerase IV (356 aa).

Residues 6–186 (IVHIDMDAFY…LPVDAFHGIG (181 aa)) enclose the UmuC domain. The Mg(2+) site is built by D10 and D104. E105 is a catalytic residue.

Belongs to the DNA polymerase type-Y family. Monomer. Requires Mg(2+) as cofactor.

The protein localises to the cytoplasm. It catalyses the reaction DNA(n) + a 2'-deoxyribonucleoside 5'-triphosphate = DNA(n+1) + diphosphate. Functionally, poorly processive, error-prone DNA polymerase involved in untargeted mutagenesis. Copies undamaged DNA at stalled replication forks, which arise in vivo from mismatched or misaligned primer ends. These misaligned primers can be extended by PolIV. Exhibits no 3'-5' exonuclease (proofreading) activity. May be involved in translesional synthesis, in conjunction with the beta clamp from PolIII. In Gluconobacter oxydans (strain 621H) (Gluconobacter suboxydans), this protein is DNA polymerase IV.